The chain runs to 292 residues: Light-independent protochlorophyllide reductase iron-sulfur ATP-binding protein (292 aa).

Residues 10 to 15 and K39 contribute to the ATP site; that span reads GIGKST. S14 is a Mg(2+) binding site. C95 contacts [4Fe-4S] cluster. 182-183 contributes to the ATP binding site; it reads NR.

The protein belongs to the NifH/BchL/ChlL family. In terms of assembly, homodimer. Protochlorophyllide reductase is composed of three subunits; ChlL, ChlN and ChlB. [4Fe-4S] cluster is required as a cofactor.

It localises to the plastid. The protein localises to the chloroplast. The enzyme catalyses chlorophyllide a + oxidized 2[4Fe-4S]-[ferredoxin] + 2 ADP + 2 phosphate = protochlorophyllide a + reduced 2[4Fe-4S]-[ferredoxin] + 2 ATP + 2 H2O. It functions in the pathway porphyrin-containing compound metabolism; chlorophyll biosynthesis (light-independent). Component of the dark-operative protochlorophyllide reductase (DPOR) that uses Mg-ATP and reduced ferredoxin to reduce ring D of protochlorophyllide (Pchlide) to form chlorophyllide a (Chlide). This reaction is light-independent. The L component serves as a unique electron donor to the NB-component of the complex, and binds Mg-ATP. In Huperzia lucidula (Shining clubmoss), this protein is Light-independent protochlorophyllide reductase iron-sulfur ATP-binding protein.